Reading from the N-terminus, the 250-residue chain is Small ribosomal subunit protein uS2 (250 aa).

Belongs to the universal ribosomal protein uS2 family.

This is Small ribosomal subunit protein uS2 from Acidovorax ebreus (strain TPSY) (Diaphorobacter sp. (strain TPSY)).